The chain runs to 152 residues: Methylglyoxal synthase (152 aa).

The MGS-like domain maps to threonine 5–lysine 152. Substrate-binding positions include histidine 19, lysine 23, threonine 45–threonine 48, and serine 65–glycine 66. The active-site Proton donor/acceptor is the aspartate 71. A substrate-binding site is contributed by histidine 98.

Belongs to the methylglyoxal synthase family.

The catalysed reaction is dihydroxyacetone phosphate = methylglyoxal + phosphate. Catalyzes the formation of methylglyoxal from dihydroxyacetone phosphate. This Erwinia tasmaniensis (strain DSM 17950 / CFBP 7177 / CIP 109463 / NCPPB 4357 / Et1/99) protein is Methylglyoxal synthase.